A 1070-amino-acid chain; its full sequence is DNA-directed RNA polymerase subunit beta (1070 aa).

This sequence belongs to the RNA polymerase beta chain family. As to quaternary structure, in plastids the minimal PEP RNA polymerase catalytic core is composed of four subunits: alpha, beta, beta', and beta''. When a (nuclear-encoded) sigma factor is associated with the core the holoenzyme is formed, which can initiate transcription.

It localises to the plastid. It is found in the chloroplast. The enzyme catalyses RNA(n) + a ribonucleoside 5'-triphosphate = RNA(n+1) + diphosphate. In terms of biological role, DNA-dependent RNA polymerase catalyzes the transcription of DNA into RNA using the four ribonucleoside triphosphates as substrates. In Lotus japonicus (Lotus corniculatus var. japonicus), this protein is DNA-directed RNA polymerase subunit beta.